The following is a 231-amino-acid chain: Endonuclease NucS (231 aa).

This sequence belongs to the NucS endonuclease family.

It is found in the cytoplasm. In terms of biological role, cleaves both 3' and 5' ssDNA extremities of branched DNA structures. This is Endonuclease NucS from Arthrobacter sp. (strain FB24).